The sequence spans 448 residues: Potassium/proton antiporter CemA (448 aa).

A run of 4 helical transmembrane segments spans residues I47–L67, L213–F233, I314–A334, and I395–I415.

It belongs to the CemA family.

It localises to the plastid membrane. The enzyme catalyses K(+)(in) + H(+)(out) = K(+)(out) + H(+)(in). Its function is as follows. May be involved in proton extrusion. The polypeptide is Potassium/proton antiporter CemA (Aneura mirabilis (Parasitic liverwort)).